We begin with the raw amino-acid sequence, 342 residues long: 4-hydroxy-2-oxovalerate aldolase (342 aa).

A Pyruvate carboxyltransferase domain is found at 7–257; the sequence is VWITEVALRD…KTGIDLYKMM (251 aa). 15 to 16 is a binding site for substrate; it reads RD. D16 lines the Mn(2+) pocket. Residue H19 is the Proton acceptor of the active site. 2 residues coordinate substrate: S169 and H196. The Mn(2+) site is built by H196 and H198. Y287 contributes to the substrate binding site.

This sequence belongs to the 4-hydroxy-2-oxovalerate aldolase family.

It carries out the reaction (S)-4-hydroxy-2-oxopentanoate = acetaldehyde + pyruvate. In Geobacillus stearothermophilus (Bacillus stearothermophilus), this protein is 4-hydroxy-2-oxovalerate aldolase (pheE).